Here is a 198-residue protein sequence, read N- to C-terminus: Protein FAM219B (198 aa).

Disordered stretches follow at residues 1 to 58 (MATA…KRGP) and 83 to 146 (RRKG…EQVN). A phosphoserine mark is found at Ser14, Ser91, Ser125, and Ser127. A compositionally biased stretch (polar residues) spans 134–146 (RYSSGYSSAEQVN).

Belongs to the FAM219 family.

This chain is Protein FAM219B (FAM219B), found in Homo sapiens (Human).